Consider the following 158-residue polypeptide: NADH-quinone oxidoreductase subunit B (158 aa).

[4Fe-4S] cluster contacts are provided by cysteine 37, cysteine 38, cysteine 102, and cysteine 132.

This sequence belongs to the complex I 20 kDa subunit family. NDH-1 is composed of 14 different subunits. Subunits NuoB, C, D, E, F, and G constitute the peripheral sector of the complex. [4Fe-4S] cluster is required as a cofactor.

It is found in the cell inner membrane. It catalyses the reaction a quinone + NADH + 5 H(+)(in) = a quinol + NAD(+) + 4 H(+)(out). NDH-1 shuttles electrons from NADH, via FMN and iron-sulfur (Fe-S) centers, to quinones in the respiratory chain. Couples the redox reaction to proton translocation (for every two electrons transferred, four hydrogen ions are translocated across the cytoplasmic membrane), and thus conserves the redox energy in a proton gradient. This is NADH-quinone oxidoreductase subunit B from Bordetella petrii (strain ATCC BAA-461 / DSM 12804 / CCUG 43448).